A 317-amino-acid chain; its full sequence is CTP-dependent diacylglycerol kinase 1 (317 aa).

Residues 1-44 are disordered; it reads MANEEELQTAESAFVTGARRYSNDYSESESSSKHSGCSTPVEGT. Topologically, residues 1–130 are lumenal; the sequence is MANEEELQTA…DVDYRNVRLP (130 aa). A compositionally biased stretch (low complexity) spans 23 to 38; the sequence is NDYSESESSSKHSGCS. A helical membrane pass occupies residues 131 to 151; the sequence is LIVGFVHVLLLDVIRLHWPAF. The Cytoplasmic portion of the chain corresponds to 152-167; sequence NTLYCQVTGLLMRKKE. Residues 168 to 188 form a helical membrane-spanning segment; it reads VHTYNGVLWYLLGLIFAFSFF. Over 189-190 the chain is Lumenal; sequence SK. Residues 191–211 traverse the membrane as a helical segment; that stretch reads DVALVSLFLLSWCDTAASTVG. Residues 212–230 lie on the Cytoplasmic side of the membrane; it reads RLYGHLTPRISRNKSLAGS. The chain crosses the membrane as a helical span at residues 231–251; sequence LAAFVVGVISCAVFYGYFVPA. Topologically, residues 252-271 are lumenal; that stretch reads YSHVNHPGEIMWNPETSRLS. Residues 272–292 form a helical membrane-spanning segment; the sequence is LVQLSLLGGFVASLSEGIDLF. Residue Asn-293 is a topological domain, cytoplasmic. A helical transmembrane segment spans residues 294–314; that stretch reads WDDNFTIPVLSAIFMHTIIAF. At 315–317 the chain is on the lumenal side; it reads SQR.

It belongs to the DGK1 family. Ca(2+) is required as a cofactor. Mg(2+) serves as cofactor.

Its subcellular location is the endoplasmic reticulum membrane. The protein resides in the nucleus membrane. It catalyses the reaction a 1,2-diacyl-sn-glycerol + CTP = a 1,2-diacyl-sn-glycero-3-phosphate + CDP + H(+). In terms of biological role, CTP-dependent diacylglycerol kinase that catalyzes the phosphorylation of diacylglycerol (DAG) to phosphatidate (PA). Controls phosphatidate levels at the nuclear envelope. May be involved in vesicle trafficking between the endoplasmic reticulum and the Golgi apparatus. The polypeptide is CTP-dependent diacylglycerol kinase 1 (DGK1) (Eremothecium gossypii (strain ATCC 10895 / CBS 109.51 / FGSC 9923 / NRRL Y-1056) (Yeast)).